The sequence spans 91 residues: YcgL domain-containing protein Sde_1339 (91 aa).

One can recognise a YcgL domain in the interval 1-85; the sequence is MIVDIYRSAK…PPESYMNEIP (85 aa). Positions 72–91 are disordered; sequence QMPPPPESYMNEIPNDKMPR.

This is YcgL domain-containing protein Sde_1339 from Saccharophagus degradans (strain 2-40 / ATCC 43961 / DSM 17024).